Reading from the N-terminus, the 108-residue chain is Thiosulfate sulfurtransferase GlpE (108 aa).

The Rhodanese domain occupies 17–105 (HQGTAVLVDI…WHRHFPSEVA (89 aa)). Residue Cys65 is the Cysteine persulfide intermediate of the active site.

This sequence belongs to the GlpE family.

It localises to the cytoplasm. The enzyme catalyses thiosulfate + hydrogen cyanide = thiocyanate + sulfite + 2 H(+). It catalyses the reaction thiosulfate + [thioredoxin]-dithiol = [thioredoxin]-disulfide + hydrogen sulfide + sulfite + 2 H(+). Functionally, transferase that catalyzes the transfer of sulfur from thiosulfate to thiophilic acceptors such as cyanide or dithiols. May function in a CysM-independent thiosulfate assimilation pathway by catalyzing the conversion of thiosulfate to sulfite, which can then be used for L-cysteine biosynthesis. This Citrobacter koseri (strain ATCC BAA-895 / CDC 4225-83 / SGSC4696) protein is Thiosulfate sulfurtransferase GlpE.